The following is a 91-amino-acid chain: UPF0250 protein Pfl01_4965 (91 aa).

Belongs to the UPF0250 family.

This Pseudomonas fluorescens (strain Pf0-1) protein is UPF0250 protein Pfl01_4965.